The primary structure comprises 149 residues: Large ribosomal subunit protein bL9 (149 aa).

The protein belongs to the bacterial ribosomal protein bL9 family.

Functionally, binds to the 23S rRNA. In Fervidobacterium nodosum (strain ATCC 35602 / DSM 5306 / Rt17-B1), this protein is Large ribosomal subunit protein bL9.